A 1553-amino-acid polypeptide reads, in one-letter code: ABC-type transporter cctS (1553 aa).

The next 4 membrane-spanning stretches (helical) occupy residues 27-47, 90-110, 114-134, and 151-171; these read LIPL…YFHA, LEVA…IFSG, DLTS…ILFV, and SVLY…AILG. N-linked (GlcNAc...) asparagine glycosylation occurs at Asn176. 5 helical membrane-spanning segments follow: residues 177–197, 286–306, 324–344, 413–433, and 438–458; these read FTIA…FHWT, LLWQ…PPVL, TAWL…VAGC, GYLY…TYLL, and GISG…NILI. The 290-residue stretch at 293–582 folds into the ABC transmembrane type-1 1 domain; it reads ATLNSFAVFV…IADAITFLLR (290 aa). Asn524 carries N-linked (GlcNAc...) asparagine glycosylation. 2 helical membrane passes run 527 to 547 and 550 to 570; these read TFFS…TVVW and SMGT…RIPF. Residue Asn617 is glycosylated (N-linked (GlcNAc...) asparagine). One can recognise an ABC transporter 1 domain in the interval 635 to 874; that stretch reads NKRSDIQLTE…GRIDADIMQN (240 aa). 670 to 677 lines the ATP pocket; the sequence is GPSGSGKS. N-linked (GlcNAc...) asparagine glycosylation occurs at Asn725. Residues 948–970 traverse the membrane as a helical segment; that stretch reads WYWVLVLFMFGIQQFISLATNIW. The ABC transmembrane type-1 2 domain maps to 951 to 1255; it reads VLVLFMFGIQ…FVQLYAIVQQ (305 aa). The N-linked (GlcNAc...) asparagine glycan is linked to Asn992. The chain crosses the membrane as a helical span at residues 1017 to 1037; sequence IYVAICLAYAFFTFARDLIVF. N-linked (GlcNAc...) asparagine glycosylation is present at Asn1085. 4 consecutive transmembrane segments (helical) span residues 1086 to 1108, 1113 to 1135, 1204 to 1224, and 1229 to 1249; these read ISTF…VFIS, AFLI…FING, FLGS…LESV, and AALV…FVQL. The ABC transporter 2 domain maps to 1294–1533; sequence VRFDAYTTRY…DDDGIFRRLC (240 aa). 1328-1335 serves as a coordination point for ATP; it reads GRTGAGKS.

It belongs to the ABC transporter superfamily.

The protein resides in the membrane. It functions in the pathway mycotoxin biosynthesis. Its function is as follows. ABC-type transporter; part of the gene cluster that mediates the biosynthesis of the mycotoxin cyclochlorotine, a hepatotoxic and carcinogenic cyclic chlorinated pentapeptide. CctS is essential for the biosynthesis of cyclochlorotine, maybe as a chloride channel that supplies chloride for chlorination by cctP2. The chain is ABC-type transporter cctS from Talaromyces islandicus (Penicillium islandicum).